The sequence spans 29 residues: Cytochrome b6-f complex subunit 8 (29 aa).

The helical transmembrane segment at 3 to 23 threads the bilayer; sequence MVSLAWAALMVVFTFSLSLVV.

The protein belongs to the PetN family. As to quaternary structure, the 4 large subunits of the cytochrome b6-f complex are cytochrome b6, subunit IV (17 kDa polypeptide, PetD), cytochrome f and the Rieske protein, while the 4 small subunits are PetG, PetL, PetM and PetN. The complex functions as a dimer.

It is found in the plastid. Its subcellular location is the chloroplast thylakoid membrane. Functionally, component of the cytochrome b6-f complex, which mediates electron transfer between photosystem II (PSII) and photosystem I (PSI), cyclic electron flow around PSI, and state transitions. This is Cytochrome b6-f complex subunit 8 from Cucumis sativus (Cucumber).